The sequence spans 454 residues: Histidine--tRNA ligase (454 aa).

It belongs to the class-II aminoacyl-tRNA synthetase family. In terms of assembly, homodimer.

Its subcellular location is the cytoplasm. It catalyses the reaction tRNA(His) + L-histidine + ATP = L-histidyl-tRNA(His) + AMP + diphosphate + H(+). This chain is Histidine--tRNA ligase, found in Bacteroides fragilis (strain YCH46).